The sequence spans 569 residues: 63 kDa chaperonin, mitochondrial (569 aa).

Residues 1 to 29 (MFKMYRSPHITRNSFKYLKATNINSCRFY) constitute a mitochondrion transit peptide.

This sequence belongs to the chaperonin (HSP60) family. As to quaternary structure, forms a single seven-member ring complex, in tight association with the p60 protein. As to expression, testis.

The protein localises to the mitochondrion. Its function is as follows. Implicated in mitochondrial protein import and macromolecular assembly. May facilitate the correct folding of imported proteins. May also prevent misfolding and promote the refolding and proper assembly of unfolded polypeptides generated under stress conditions in the mitochondrial matrix. The protein is 63 kDa chaperonin, mitochondrial of Heliothis virescens (Tobacco budworm moth).